The chain runs to 93 residues: DNA-binding protein HU 1 (93 aa).

The protein belongs to the bacterial histone-like protein family. Homodimer.

It is found in the cytoplasm. It localises to the nucleoid. Histone-like DNA-binding protein which is capable of wrapping DNA to stabilize it, and thus to prevent its denaturation under extreme environmental conditions. The chain is DNA-binding protein HU 1 (hup1) from Streptomyces coelicolor (strain ATCC BAA-471 / A3(2) / M145).